The following is a 524-amino-acid chain: Phenylalanine--tRNA ligase alpha subunit (524 aa).

L-phenylalanine contacts are provided by T362, Y441, and F467.

Belongs to the class-II aminoacyl-tRNA synthetase family. Phe-tRNA synthetase alpha subunit type 2 subfamily. As to quaternary structure, tetramer of two alpha and two beta subunits. Mg(2+) serves as cofactor.

The protein localises to the cytoplasm. It catalyses the reaction tRNA(Phe) + L-phenylalanine + ATP = L-phenylalanyl-tRNA(Phe) + AMP + diphosphate + H(+). The chain is Phenylalanine--tRNA ligase alpha subunit from Methanopyrus kandleri (strain AV19 / DSM 6324 / JCM 9639 / NBRC 100938).